Here is a 355-residue protein sequence, read N- to C-terminus: Carbohydrate sulfotransferase 10 (355 aa).

Topologically, residues 1–6 (MHHRWL) are cytoplasmic. The helical; Signal-anchor for type II membrane protein transmembrane segment at 7-27 (LLVACFWVLFMLMVASKLITL) threads the bilayer. At 28-355 (TMKDPEGYGN…FGYKEPTFLF (328 aa)) the chain is on the lumenal side. 2 N-linked (GlcNAc...) asparagine glycosylation sites follow: N93 and N98. 3'-phosphoadenylyl sulfate-binding positions include 126–132 (PKVGNTQ) and 188–196 (RDPFERLIS). N-linked (GlcNAc...) asparagine glycosylation occurs at N316.

It belongs to the sulfotransferase 2 family.

It is found in the golgi apparatus membrane. In terms of biological role, catalyzes the transfer of sulfate to position 3 of terminal glucuronic acid of both protein- and lipid-linked oligosaccharides. Participates in biosynthesis of HNK-1 carbohydrate structure, a sulfated glucuronyl-lactosaminyl residue carried by many neural recognition molecules. The sequence is that of Carbohydrate sulfotransferase 10 (chst10) from Xenopus laevis (African clawed frog).